The following is a 789-amino-acid chain: MEFNLDNFRLRKYSKITKKILALGKKYQTLTDDQLRIKTETLRNKLVKGASLDSILIEAYATIREADFRVLGLKPFENQVLGAVVLHYGNVAQMNTGEGKTLTATMPLYLNGLTGPGNFLVTVNSYLANRDAEEIGKVYKWMGLTCASGVSLDDEELDKKAIYQNDIVYTTNSELGFDYLTDNLVDNINKKKLNDLNFALVDEVDSVLLDLAQTPLVISGAPRVQSNLFVSTDRIVKSLKPNVDFEFSEDLKDVWFTQTGIEQLEEYLGIQGLISDKWSDFYRHLVLALKANYVMKRNQDYIVTNREVLLLDSENGRALTGMKLEAGIHQAIEAKEEVELSDQTRSMASITLQNFFKMFRKLSGMTGTAKSSAREFLEVYNLPVLKIPTHKPNIRIDHADVVFATMDEKIEATVRMVKAAYQIKRPVLLKTGSLSLSRLYSRVLLEHGIVHNVLNAQSESKEAMIVASAGKSGAITVATSMAGRGTDIKLGKGVKEKGGLLVIGTERMDSRRVDDQLRGRAGRQGDPGESIFLVSLDDKVVIENAPDWVEKYRLKLEQAVEQGKRKYGAPLKGRRARKIVEKAQQAADSAAEESRKNAVKMDDILRIQRELIYDFRDYIMKSTDLTTMVQQIKNDYFNAIARENKKDAGKLLDFIINNVDYNYMDNDFNPEILESTADIKQYLEEIARNRWSQQQMIVNNKFKQNYLERLAVLKALDVAWIEQVDNLQQLKTVVTSRSSGQHNPVFEYEKEAMHSFEQMKKLFWKNTVKYMLLSELIPGKNGSVRVEFP.

ATP-binding positions include glutamine 79, 97-101, and aspartate 487; that span reads GEGKT.

Belongs to the SecA family. Monomer and homodimer. Part of the essential Sec protein translocation apparatus which comprises SecA, SecYEG and auxiliary proteins SecDF. Other proteins may also be involved.

The protein localises to the cell membrane. Its subcellular location is the cytoplasm. The enzyme catalyses ATP + H2O + cellular proteinSide 1 = ADP + phosphate + cellular proteinSide 2.. Functionally, part of the Sec protein translocase complex. Interacts with the SecYEG preprotein conducting channel. Has a central role in coupling the hydrolysis of ATP to the transfer of proteins into and across the cell membrane, serving as an ATP-driven molecular motor driving the stepwise translocation of polypeptide chains across the membrane. The chain is Protein translocase subunit SecA 2 from Pediococcus pentosaceus (strain ATCC 25745 / CCUG 21536 / LMG 10740 / 183-1w).